The primary structure comprises 520 residues: Sensory neuron membrane protein 1 (520 aa).

The Cytoplasmic portion of the chain corresponds to 1–5 (MKPKK). A helical transmembrane segment spans residues 6 to 26 (LGIIGGSLLAFGILICAIAFP). The Extracellular portion of the chain corresponds to 27–451 (PFLRSQVKKQ…KLKTVFKTIS (425 aa)). N-linked (GlcNAc...) asparagine glycans are attached at residues asparagine 64, asparagine 224, and asparagine 268. 3 disulfides stabilise this stretch: cysteine 264–cysteine 329, cysteine 293–cysteine 348, and cysteine 331–cysteine 337. Residues 452–472 (IVGFMKWFTIVSGTCVSGAAA) traverse the membrane as a helical segment. Over 473-520 (ALFFKNKDKNKLDITKVTPQKGEEKKWPNQMTISTIQSAAVPPNLDAD) the chain is Cytoplasmic.

It belongs to the CD36 family.

It localises to the cell membrane. Plays an olfactory role that is not restricted to pheromone sensitivity. The chain is Sensory neuron membrane protein 1 from Apis mellifera (Honeybee).